Reading from the N-terminus, the 244-residue chain is Nuclear protein UL4 homolog (244 aa).

The tract at residues 193-227 (RPDDQTTPTPTPHQYTSQRRQPETNCPSSPQPAFF) is disordered. The span at 205–220 (HQYTSQRRQPETNCPS) shows a compositional bias: polar residues.

The protein belongs to the alphaherpesvirinae HHV-1 UL4 family.

The protein localises to the host nucleus. The chain is Nuclear protein UL4 homolog from Varicella-zoster virus (strain Dumas) (HHV-3).